A 514-amino-acid chain; its full sequence is ATP synthase subunit alpha (514 aa).

170-177 (GDRQIGKT) contributes to the ATP binding site.

It belongs to the ATPase alpha/beta chains family. In terms of assembly, F-type ATPases have 2 components, CF(1) - the catalytic core - and CF(0) - the membrane proton channel. CF(1) has five subunits: alpha(3), beta(3), gamma(1), delta(1), epsilon(1). CF(0) has three main subunits: a(1), b(2) and c(9-12). The alpha and beta chains form an alternating ring which encloses part of the gamma chain. CF(1) is attached to CF(0) by a central stalk formed by the gamma and epsilon chains, while a peripheral stalk is formed by the delta and b chains.

It localises to the cell inner membrane. It carries out the reaction ATP + H2O + 4 H(+)(in) = ADP + phosphate + 5 H(+)(out). Produces ATP from ADP in the presence of a proton gradient across the membrane. The alpha chain is a regulatory subunit. This Pseudomonas putida (strain W619) protein is ATP synthase subunit alpha.